The sequence spans 331 residues: Probable mannose-1-phosphate guanylyltransferase 3 (331 aa).

Position 3 (Lys3) interacts with diphosphate. Residues Gly66, Asn90, Asp92, Gly127, and Asn154 each coordinate GDP-alpha-D-mannose.

The protein belongs to the transferase hexapeptide repeat family.

The enzyme catalyses alpha-D-mannose 1-phosphate + GTP + H(+) = GDP-alpha-D-mannose + diphosphate. The protein operates within nucleotide-sugar biosynthesis; GDP-alpha-D-mannose biosynthesis; GDP-alpha-D-mannose from alpha-D-mannose 1-phosphate (GTP route): step 1/1. Functionally, catalyzes a reaction of the Smirnoff-Wheeler pathway, the major route to ascorbate biosynthesis in plants. This chain is Probable mannose-1-phosphate guanylyltransferase 3, found in Arabidopsis thaliana (Mouse-ear cress).